The following is a 315-amino-acid chain: Ribose-phosphate pyrophosphokinase (315 aa).

Residues 40–42 (DGE) and 99–100 (RQ) each bind ATP. Mg(2+) contacts are provided by His133 and Asp175. Lys198 is an active-site residue. Residues Arg200, Asp224, and 228 to 232 (DTAHS) each bind D-ribose 5-phosphate.

Belongs to the ribose-phosphate pyrophosphokinase family. Class I subfamily. In terms of assembly, homohexamer. Mg(2+) is required as a cofactor.

It is found in the cytoplasm. The enzyme catalyses D-ribose 5-phosphate + ATP = 5-phospho-alpha-D-ribose 1-diphosphate + AMP + H(+). Its pathway is metabolic intermediate biosynthesis; 5-phospho-alpha-D-ribose 1-diphosphate biosynthesis; 5-phospho-alpha-D-ribose 1-diphosphate from D-ribose 5-phosphate (route I): step 1/1. Involved in the biosynthesis of the central metabolite phospho-alpha-D-ribosyl-1-pyrophosphate (PRPP) via the transfer of pyrophosphoryl group from ATP to 1-hydroxyl of ribose-5-phosphate (Rib-5-P). The sequence is that of Ribose-phosphate pyrophosphokinase from Thermotoga maritima (strain ATCC 43589 / DSM 3109 / JCM 10099 / NBRC 100826 / MSB8).